A 335-amino-acid polypeptide reads, in one-letter code: Thioredoxin-related transmembrane protein 4 (335 aa).

An N-terminal signal peptide occupies residues 1-20; it reads MTGGFCVPVLLAAWLAAAAA. Residues 26–133 form the Thioredoxin domain; it reads AALPAEESRV…YEDLQNYILE (108 aa). Catalysis depends on nucleophile residues C60 and C63. C60 and C63 are oxidised to a cystine. Residues 186–206 traverse the membrane as a helical segment; the sequence is VFFVIATLVFGLFMGLILVVI. Positions 222–316 are disordered; the sequence is CEQEQSTGEA…EDGAHPADTQ (95 aa). Positions 238-280 are enriched in acidic residues; that stretch reads QDAEEEKDDSNEEENKDSLVDDEEEKEDIGDEDEGEEDEEEDN. Phosphoserine occurs at positions 247 and 255. Positions 286-298 are enriched in basic and acidic residues; the sequence is AEERSDTNERAVV.

It localises to the nucleus inner membrane. It is found in the endoplasmic reticulum membrane. This chain is Thioredoxin-related transmembrane protein 4 (Tmx4), found in Mus musculus (Mouse).